The chain runs to 171 residues: 3-hydroxydecanoyl-[acyl-carrier-protein] dehydratase (171 aa).

H70 is an active-site residue.

It belongs to the thioester dehydratase family. FabA subfamily. In terms of assembly, homodimer.

Its subcellular location is the cytoplasm. The enzyme catalyses a (3R)-hydroxyacyl-[ACP] = a (2E)-enoyl-[ACP] + H2O. The catalysed reaction is (3R)-hydroxydecanoyl-[ACP] = (2E)-decenoyl-[ACP] + H2O. It carries out the reaction (2E)-decenoyl-[ACP] = (3Z)-decenoyl-[ACP]. Its pathway is lipid metabolism; fatty acid biosynthesis. Functionally, necessary for the introduction of cis unsaturation into fatty acids. Catalyzes the dehydration of (3R)-3-hydroxydecanoyl-ACP to E-(2)-decenoyl-ACP and then its isomerization to Z-(3)-decenoyl-ACP. Can catalyze the dehydratase reaction for beta-hydroxyacyl-ACPs with saturated chain lengths up to 16:0, being most active on intermediate chain length. In Xanthomonas oryzae pv. oryzae (strain MAFF 311018), this protein is 3-hydroxydecanoyl-[acyl-carrier-protein] dehydratase.